Consider the following 206-residue polypeptide: Urease accessory protein UreG (206 aa).

A GTP-binding site is contributed by 13 to 20 (GPVGSGKT).

This sequence belongs to the SIMIBI class G3E GTPase family. UreG subfamily. As to quaternary structure, homodimer. UreD, UreF and UreG form a complex that acts as a GTP-hydrolysis-dependent molecular chaperone, activating the urease apoprotein by helping to assemble the nickel containing metallocenter of UreC. The UreE protein probably delivers the nickel.

The protein localises to the cytoplasm. Facilitates the functional incorporation of the urease nickel metallocenter. This process requires GTP hydrolysis, probably effectuated by UreG. The sequence is that of Urease accessory protein UreG from Natronomonas pharaonis (strain ATCC 35678 / DSM 2160 / CIP 103997 / JCM 8858 / NBRC 14720 / NCIMB 2260 / Gabara) (Halobacterium pharaonis).